The chain runs to 241 residues: Fatty acid metabolism regulator protein (241 aa).

Positions 11–79 (QSPAALAEEY…HGKPTKVNNI (69 aa)) constitute an HTH gntR-type domain. The segment at residues 39 to 58 (ERDLADKIGVTRTTLREVLQ) is a DNA-binding region (H-T-H motif).

As to quaternary structure, homodimer.

It is found in the cytoplasm. Functionally, multifunctional regulator of fatty acid metabolism. This chain is Fatty acid metabolism regulator protein, found in Haemophilus influenzae (strain 86-028NP).